The chain runs to 554 residues: Hydroxylamine reductase (554 aa).

Positions 3, 6, 18, and 25 each coordinate [2Fe-2S] cluster. Hybrid [4Fe-2O-2S] cluster is bound by residues histidine 252, glutamate 276, cysteine 320, cysteine 408, cysteine 436, cysteine 461, glutamate 495, and lysine 497. Cysteine 408 is subject to Cysteine persulfide.

Belongs to the HCP family. Requires [2Fe-2S] cluster as cofactor. Hybrid [4Fe-2O-2S] cluster serves as cofactor.

The protein resides in the cytoplasm. It catalyses the reaction A + NH4(+) + H2O = hydroxylamine + AH2 + H(+). Its function is as follows. Catalyzes the reduction of hydroxylamine to form NH(3) and H(2)O. This is Hydroxylamine reductase from Shewanella amazonensis (strain ATCC BAA-1098 / SB2B).